The sequence spans 446 residues: MMITLRKLPLAVAVAAGVMSAQAMAVDFHGYARSGIGWTGSGGEQQCFQTTGAQSKYRLGNECETYAELKLGQEVWKEGDKSFYFDTNVAYSVAQQNDWEATDPAFREANVQGKNLIEWLPGSTIWAGKRFYQRHDVHMIDFYYWDISGPGAGLENIDVGFGKLSLAATRSSEAGGSSSFASNNIYDYTNETANDVFDVRLAQMEINPGGTLELGVDYGRANLRDNYRLVDGASKDGWLFTAEHTQSVLKGFNKFVVQYATDSMTSQGKGLSQGSGVAFDNEKFAYNINNNGHMLRILDHGAISMGDNWDMMYVGMYQDINWDNDNGTKWWTVGIRPMYKWTPIMSTVMEIGYDNVESQRTGDKNNQYKITLAQQWQAGDSIWSRPAIRVFATYAKWDEKWGYDYTGSSSTNPYYGKAVSADFNGGSFGRGDSDEWTFGAQMEIWW.

An N-terminal signal peptide occupies residues 1–25 (MMITLRKLPLAVAVAAGVMSAQAMA).

Belongs to the porin LamB (TC 1.B.3) family. In terms of assembly, homotrimer formed of three 18-stranded antiparallel beta-barrels, containing three independent channels.

The protein localises to the cell outer membrane. It carries out the reaction beta-maltose(in) = beta-maltose(out). Functionally, involved in the transport of maltose and maltodextrins. This is Maltoporin from Escherichia coli O127:H6 (strain E2348/69 / EPEC).